A 416-amino-acid chain; its full sequence is MLNAQQFLNQFSLEAPLDESLYPIIRDICQEVKVHGDKALKMYNLTFDHTKTDHLEISHEQIKAAFDTLDEKTKQALQQSYERIKAYQESIKQTNQQLEKSVECYEIYHPLESVGIYVPGGKASYPSTVLMTATLAQVAGVENIVVVTPPQPNGVSQEVLAACYITQVNQVFQVGGAQSIAALTYGTETIPKVDKIVGPGNQFVAYAKKYLFGQVGIDQIAGPTEIALIIDDTADLDAIVYDVFAQAEHDELARTYVISEDAQVLKDLESRITKALPNVDRYDIVSKSIANQHYLIHASNFDDACHVMNTIAPEHASIQTVNPQPYIEKVKYVGALFIGHYSPEVIGDYVAGPSHVLPTNRTARFTNGLSVNDFLTRNTVIHLSKDTFEQIADSAQHIAHVEALYNHQQSILIRQS.

NAD(+)-binding residues include Tyr-117, Gln-178, and Asn-201. Thr-224, Gln-246, and His-249 together coordinate substrate. Zn(2+)-binding residues include Gln-246 and His-249. Active-site proton acceptor residues include Glu-314 and His-315. Substrate contacts are provided by His-315, Asp-348, Glu-402, and His-407. Position 348 (Asp-348) interacts with Zn(2+). His-407 serves as a coordination point for Zn(2+).

It belongs to the histidinol dehydrogenase family. It depends on Zn(2+) as a cofactor.

The catalysed reaction is L-histidinol + 2 NAD(+) + H2O = L-histidine + 2 NADH + 3 H(+). It functions in the pathway amino-acid biosynthesis; L-histidine biosynthesis; L-histidine from 5-phospho-alpha-D-ribose 1-diphosphate: step 9/9. Catalyzes the sequential NAD-dependent oxidations of L-histidinol to L-histidinaldehyde and then to L-histidine. This Staphylococcus aureus (strain bovine RF122 / ET3-1) protein is Histidinol dehydrogenase.